The following is a 397-amino-acid chain: Lysophospholipid transporter LplT (397 aa).

11 helical membrane passes run 16–36 (MMAV…LLFA), 53–73 (VLQM…GQVA), 91–111 (LGAV…LVGV), 139–159 (LMES…GMLA), 164–184 (GAAL…NLLI), 229–249 (WGAG…ALGI), 257–277 (YLNA…AKLV), 282–302 (VSRC…FSLQ), 304–324 (AALP…FFVV), 344–364 (IAVQ…LYSL), and 372–392 (VVGI…GLWL).

The protein belongs to the major facilitator superfamily. LplT (TC 2.A.1.42) family.

It is found in the cell inner membrane. Catalyzes the facilitated diffusion of 2-acyl-glycero-3-phosphoethanolamine (2-acyl-GPE) into the cell. This Cronobacter sakazakii (strain ATCC BAA-894) (Enterobacter sakazakii) protein is Lysophospholipid transporter LplT.